Here is a 346-residue protein sequence, read N- to C-terminus: tRNA N6-adenosine threonylcarbamoyltransferase (346 aa).

Residues His117 and His121 each contribute to the Fe cation site. Substrate contacts are provided by residues 139-143, Asp172, Gly185, Asp189, and Asn278; that span reads QVSGG. Fe cation is bound at residue Asp308.

The protein belongs to the KAE1 / TsaD family. Requires Fe(2+) as cofactor.

The protein localises to the cytoplasm. It catalyses the reaction L-threonylcarbamoyladenylate + adenosine(37) in tRNA = N(6)-L-threonylcarbamoyladenosine(37) in tRNA + AMP + H(+). Required for the formation of a threonylcarbamoyl group on adenosine at position 37 (t(6)A37) in tRNAs that read codons beginning with adenine. Is involved in the transfer of the threonylcarbamoyl moiety of threonylcarbamoyl-AMP (TC-AMP) to the N6 group of A37, together with TsaE and TsaB. TsaD likely plays a direct catalytic role in this reaction. This Lactobacillus delbrueckii subsp. bulgaricus (strain ATCC 11842 / DSM 20081 / BCRC 10696 / JCM 1002 / NBRC 13953 / NCIMB 11778 / NCTC 12712 / WDCM 00102 / Lb 14) protein is tRNA N6-adenosine threonylcarbamoyltransferase.